Reading from the N-terminus, the 591-residue chain is Serine/threonine-protein kinase PAK 4 (591 aa).

In terms of domain architecture, CRIB spans 11–24 (ISAPSNFEHRVHTG). Residues 25–320 (FDQHEQKFTG…VVDPGDPRSY (296 aa)) form a linker region. Serine 41 bears the Phosphoserine mark. Residue lysine 78 is modified to N6-methyllysine. The disordered stretch occupies residues 95–301 (TRSNSLRRDS…PQREPQRVSH (207 aa)). Residues serine 104 and serine 148 each carry the phosphoserine modification. Basic and acidic residues predominate over residues 149–164 (GDRRRAGPEKRPKSSR). 2 positions are modified to phosphoserine: serine 167 and serine 181. A Phosphothreonine modification is found at threonine 187. A compositionally biased stretch (low complexity) spans 191–202 (AGLASGAKLAAG). Residue serine 195 is modified to Phosphoserine. Phosphothreonine is present on threonine 207. The span at 242 to 260 (SSSSSSRPPTRARGAPSPG) shows a compositional bias: low complexity. Residues serine 258 and serine 267 each carry the phosphoserine modification. A compositionally biased stretch (pro residues) spans 271–290 (LAPPACTPAAPAVPGPPGPR). Serine 291 is modified (phosphoserine). Over residues 292 to 301 (PQREPQRVSH) the composition is skewed to basic and acidic residues. Positions 298 to 323 (RVSHEQFRAALQLVVDPGDPRSYLDN) are GEF-interaction domain (GID). Positions 321–572 (LDNFIKIGEG…AAELLKHPFL (252 aa)) constitute a Protein kinase domain. ATP-binding positions include 327–335 (IGEGSTGIV), lysine 350, and 396–398 (EFL). The Proton acceptor role is filled by aspartate 440. ATP is bound at residue 458 to 460 (DFG). A Phosphoserine; by autocatalysis modification is found at serine 474.

The protein belongs to the protein kinase superfamily. STE Ser/Thr protein kinase family. STE20 subfamily. In terms of assembly, interacts with FGFR2 and GRB2. Interacts tightly with GTP-bound but not GDP-bound CDC42/p21 and weakly with RAC1. Interacts with INKA1. Interacts with SH3RF2. Interacts with RHOU and PAXI; the PAK4-RHOU complex protects RHOU from ubiquitination and acts as a scaffold to suppport paxillin/PAXI phosphorylation. In terms of processing, autophosphorylated on serine residues when activated by CDC42/p21. Phosphorylated on tyrosine residues upon stimulation of FGFR2. Methylated by SETD6. Polyubiquitinated, leading to its proteasomal degradation. Highest expression in prostate, testis and colon.

It is found in the cytoplasm. The catalysed reaction is L-seryl-[protein] + ATP = O-phospho-L-seryl-[protein] + ADP + H(+). It catalyses the reaction L-threonyl-[protein] + ATP = O-phospho-L-threonyl-[protein] + ADP + H(+). With respect to regulation, inhibited by INKA1; which inhibits the serine/threonine-protein kinase activity by binding PAK4 in a substrate-like manner. Functionally, serine/threonine-protein kinase that plays a role in a variety of different signaling pathways including cytoskeleton regulation, cell adhesion turnover, cell migration, growth, proliferation or cell survival. Activation by various effectors including growth factor receptors or active CDC42 and RAC1 results in a conformational change and a subsequent autophosphorylation on several serine and/or threonine residues. Phosphorylates and inactivates the protein phosphatase SSH1, leading to increased inhibitory phosphorylation of the actin binding/depolymerizing factor cofilin. Decreased cofilin activity may lead to stabilization of actin filaments. Phosphorylates LIMK1, a kinase that also inhibits the activity of cofilin. Phosphorylates integrin beta5/ITGB5 and thus regulates cell motility. Phosphorylates ARHGEF2 and activates the downstream target RHOA that plays a role in the regulation of assembly of focal adhesions and actin stress fibers. Stimulates cell survival by phosphorylating the BCL2 antagonist of cell death BAD. Alternatively, inhibits apoptosis by preventing caspase-8 binding to death domain receptors in a kinase independent manner. Plays a role in cell-cycle progression by controlling levels of the cell-cycle regulatory protein CDKN1A and by phosphorylating RAN. Promotes kinase-independent stabilization of RHOU, thereby contributing to focal adhesion disassembly during cell migration. This Homo sapiens (Human) protein is Serine/threonine-protein kinase PAK 4.